We begin with the raw amino-acid sequence, 228 residues long: Triosephosphate isomerase (228 aa).

Residue 9–11 (NFK) coordinates substrate. His93 acts as the Electrophile in catalysis. The Proton acceptor role is filled by Glu141. Residues Ile146, Gly181, and 202-203 (AS) contribute to the substrate site.

Belongs to the triosephosphate isomerase family. In terms of assembly, homotetramer; dimer of dimers.

It is found in the cytoplasm. The catalysed reaction is D-glyceraldehyde 3-phosphate = dihydroxyacetone phosphate. It participates in carbohydrate biosynthesis; gluconeogenesis. It functions in the pathway carbohydrate degradation; glycolysis; D-glyceraldehyde 3-phosphate from glycerone phosphate: step 1/1. In terms of biological role, involved in the gluconeogenesis. Catalyzes stereospecifically the conversion of dihydroxyacetone phosphate (DHAP) to D-glyceraldehyde-3-phosphate (G3P). This is Triosephosphate isomerase from Pyrobaculum calidifontis (strain DSM 21063 / JCM 11548 / VA1).